Reading from the N-terminus, the 473-residue chain is Vasculin (473 aa).

Disordered stretches follow at residues 1–25 (MAQH…SSLN), 44–170 (RRRH…SRTP), and 186–341 (SGFP…HQER). Serine 49 carries the phosphoserine modification. Arginine 87 carries the omega-N-methylarginine modification. Residues 94–117 (NSRSRSSIFHSGKSQGLHENSIPD) show a composition bias toward polar residues. The segment covering 119–133 (ETGRKEDKRERRQFE) has biased composition (basic and acidic residues). Polar residues-rich tracts occupy residues 193–204 (NLQSQPVKNGTG) and 248–286 (NFNT…QQPR). Serine 274, serine 276, serine 322, and serine 381 each carry phosphoserine. Residues 293–329 (MRSDKKSEFLKALKRDRVEEEHEDESHAGSEKDDDSF) show a composition bias toward basic and acidic residues. The disordered stretch occupies residues 450–473 (TFKPTIENDDTETSSSDTSDDDDV). A compositionally biased stretch (acidic residues) spans 456-473 (ENDDTETSSSDTSDDDDV).

Belongs to the vasculin family. As to quaternary structure, interacts with GTF2B, GTF2F2, RNA polymerase II and TBP. As to expression, ubiquitously expressed (at protein level).

It localises to the nucleus. In terms of biological role, functions as a GC-rich promoter-specific transactivating transcription factor. In Mus musculus (Mouse), this protein is Vasculin (Gpbp1).